A 60-amino-acid chain; its full sequence is Large ribosomal subunit protein uL30 (60 aa).

Belongs to the universal ribosomal protein uL30 family. In terms of assembly, part of the 50S ribosomal subunit.

The sequence is that of Large ribosomal subunit protein uL30 from Nocardioides sp. (strain ATCC BAA-499 / JS614).